The sequence spans 311 residues: Probable deoxyhypusine synthase (311 aa).

Lysine 284 functions as the Nucleophile in the catalytic mechanism.

It belongs to the deoxyhypusine synthase family. NAD(+) serves as cofactor.

The enzyme catalyses [eIF5A protein]-L-lysine + spermidine = [eIF5A protein]-deoxyhypusine + propane-1,3-diamine. Its pathway is protein modification; eIF5A hypusination. Its function is as follows. Catalyzes the NAD-dependent oxidative cleavage of spermidine and the subsequent transfer of the butylamine moiety of spermidine to the epsilon-amino group of a specific lysine residue of the eIF-5A precursor protein to form the intermediate deoxyhypusine residue. The protein is Probable deoxyhypusine synthase (dys) of Sulfurisphaera tokodaii (strain DSM 16993 / JCM 10545 / NBRC 100140 / 7) (Sulfolobus tokodaii).